Reading from the N-terminus, the 801-residue chain is K(+)-insensitive pyrophosphate-energized proton pump (801 aa).

5 helical membrane-spanning segments follow: residues 27 to 47, 81 to 101, 109 to 129, 170 to 190, and 201 to 221; these read VIVM…GILV, TLGV…ADDW, VFFL…MWLA, GVVG…VVLV, and GFGL…GIFT. Lys-222 is a substrate binding site. Mg(2+) is bound by residues Asp-225, Asp-229, Asn-252, and Asp-255. A run of 7 helical transmembrane segments spans residues 261-281, 292-312, 328-348, 372-392, 406-426, 429-449, and 453-473; these read AGMA…ALIL, AFPL…IFAV, GFFV…YVYL, ILAM…QQLT, IGKS…SVGL, AVYT…LGGT, and LALF…GVIV. Asp-483 is a Mg(2+) binding site. 4 consecutive transmembrane segments (helical) span residues 515–535, 571–591, 641–661, and 663–683; these read AITK…LFGS, VGLI…INAV, LLAV…ALGA, and LAGA…SGGA. The Ca(2+) site is built by Asp-685, Asp-711, and Asp-715. Lys-718 lines the substrate pocket. The next 2 membrane-spanning stretches (helical) occupy residues 724-744 and 754-774; these read AINP…PAVV and LGVR…AVYI.

This sequence belongs to the H(+)-translocating pyrophosphatase (TC 3.A.10) family. K(+)-insensitive subfamily. Homodimer. It depends on Mg(2+) as a cofactor.

It is found in the cell membrane. The enzyme catalyses diphosphate + H2O + H(+)(in) = 2 phosphate + 2 H(+)(out). Functionally, proton pump that utilizes the energy of pyrophosphate hydrolysis as the driving force for proton movement across the membrane. Generates a proton motive force. This Streptomyces avermitilis (strain ATCC 31267 / DSM 46492 / JCM 5070 / NBRC 14893 / NCIMB 12804 / NRRL 8165 / MA-4680) protein is K(+)-insensitive pyrophosphate-energized proton pump.